The following is a 397-amino-acid chain: Beta-lactamase (397 aa).

Positions 1–26 (MRDTRFPCLCGIAASTLLFATTPAIA) are cleaved as a signal peptide. Serine 90 functions as the Acyl-ester intermediate in the catalytic mechanism. Positions 90, 146, 177, 179, and 370 each coordinate a beta-lactam. The active-site Proton acceptor is the tyrosine 177.

It belongs to the class-C beta-lactamase family. As to quaternary structure, monomer.

Its subcellular location is the periplasm. The enzyme catalyses a beta-lactam + H2O = a substituted beta-amino acid. In terms of biological role, class C beta-lactamase which confers resistance to penicillins and cephalosporins. Has nitrocefin-hydrolyzing activity. The polypeptide is Beta-lactamase (ampC) (Pseudomonas aeruginosa (strain ATCC 15692 / DSM 22644 / CIP 104116 / JCM 14847 / LMG 12228 / 1C / PRS 101 / PAO1)).